We begin with the raw amino-acid sequence, 490 residues long: MYHGMNPSNGDGFLEQQQQQQQPQSPQRLLAVILWFQLALCFGPAQLTGGFDDLQVCADPGIPENGFRTPSGGVFFEGSVARFHCQDGFKLKGATKRLCLKHFNGTLGWIPSDNSICVQEDCRIPQIEDAEIHNKTYRHGEKLIITCHEGFKIRYPDLHNMVSLCRDDGTWNNLPICQGCLRPLASSNGYVNISELQTSFPVGTVISYRCFPGFKLDGSAYLECLQNLIWSSSPPRCLALEVCPLPPMVSHGDFVCHPRPCERYNHGTVVEFYCDPGYSLTSDYKYITCQYGEWFPSYQVYCIKSEQTWPSTHETLLTTWKIVAFTATSVLLVLLLVILARMFQTKFKAHFPPRGPPRSSSSDPDFVVVDGVPVMLPSYDEAVSGGLSALGPGYMASVGQGCPLPVDDQSPPAYPGSGDTDTGPGESETCDSVSGSSELLQSLYSPPRCQESTHPASDNPDIIASTAEEVASTSPGIDIADEIPLMEEDP.

The disordered stretch occupies residues 1–21; that stretch reads MYHGMNPSNGDGFLEQQQQQQ. The N-terminal stretch at 1 to 41 is a signal peptide; that stretch reads MYHGMNPSNGDGFLEQQQQQQQPQSPQRLLAVILWFQLALC. The Extracellular segment spans residues 42 to 319; that stretch reads FGPAQLTGGF…PSTHETLLTT (278 aa). Sushi domains lie at 55 to 119, 120 to 179, 178 to 239, and 241 to 304; these read QVCA…ICVQ, EDCR…ICQG, QGCL…RCLA, and EVCP…YCIK. Intrachain disulfides connect C57/C99, C85/C117, C122/C165, C147/C177, C180/C224, C210/C237, C243/C289, and C274/C302. N104 and N134 each carry an N-linked (GlcNAc...) asparagine glycan. N192 carries an N-linked (GlcNAc...) asparagine glycan. A helical membrane pass occupies residues 320–340; the sequence is WKIVAFTATSVLLVLLLVILA. Residues 341-490 are Cytoplasmic-facing; that stretch reads RMFQTKFKAH…DEIPLMEEDP (150 aa). Positions 401 to 490 are disordered; sequence GCPLPVDDQS…DEIPLMEEDP (90 aa). Polar residues predominate over residues 430-456; it reads CDSVSGSSELLQSLYSPPRCQESTHPA. Positions 479–490 are enriched in acidic residues; the sequence is IADEIPLMEEDP.

Isoform 3 is the predominant isoform in all tissues except cortex, cerebellum, kidney, and breast. Isoform 1 is found primarily in the esophagus and the brain.

Its subcellular location is the membrane. It is found in the secreted. Functionally, acts as a complement inhibitor by disrupting the formation of the classical C3 convertase. Isoform 3 inhibits the classical complement pathway, while membrane-bound isoform 1 inhibits deposition of C3b via both the classical and alternative complement pathways. The polypeptide is Sushi domain-containing protein 4 (SUSD4) (Homo sapiens (Human)).